The sequence spans 377 residues: Ribosomal RNA large subunit methyltransferase G (377 aa).

This sequence belongs to the methyltransferase superfamily. RlmG family.

It is found in the cytoplasm. The catalysed reaction is guanosine(1835) in 23S rRNA + S-adenosyl-L-methionine = N(2)-methylguanosine(1835) in 23S rRNA + S-adenosyl-L-homocysteine + H(+). Its function is as follows. Specifically methylates the guanine in position 1835 (m2G1835) of 23S rRNA. This is Ribosomal RNA large subunit methyltransferase G from Aeromonas salmonicida (strain A449).